A 322-amino-acid chain; its full sequence is (12E)-labda-8(17),12,14-triene synthase (322 aa).

The segment covering 1 to 11 has biased composition (polar residues); sequence MNDATRTSTTP. The disordered stretch occupies residues 1-26; sequence MNDATRTSTTPPALPMPDLRDSFPGP. The Mg(2+) site is built by Asp93 and Glu98. A DDXXXE motif motif is present at residues 93–98; it reads DDAHGE. Arg188 is a binding site for substrate. The Mg(2+) site is built by Asn234 and Ser238. An NXXXSXXXE motif motif is present at residues 234–242; sequence NDLASYAKE. Residue Lys241 coordinates substrate. Mg(2+) is bound at residue Glu242. A substrate-binding site is contributed by 319-320; the sequence is RY.

This sequence belongs to the terpene synthase family. The cofactor is Mg(2+).

The enzyme catalyses (+)-copalyl diphosphate = (12E)-labda-8(17),12,14-triene + diphosphate. Functionally, involved in the biosynthesis of the labdane-type bicyclic diterpene labda-8(17),12(E),14-triene. Catalyzes the conversion of (+)-copalyl diphosphate to yield labda-8(17),12(E),14-triene. The sequence is that of (12E)-labda-8(17),12,14-triene synthase from Streptomyces anulatus (Streptomyces chrysomallus).